Here is a 430-residue protein sequence, read N- to C-terminus: uncharacterized protein (430 aa).

This is an uncharacterized protein from Bos taurus (Bovine).